Consider the following 143-residue polypeptide: Ribosome-binding factor A (143 aa).

The segment at 119–143 is disordered; the sequence is KAKQQQFTPDTPDNSESVDGEKEQD. A compositionally biased stretch (polar residues) spans 122–133; that stretch reads QQQFTPDTPDNS.

It belongs to the RbfA family. Monomer. Binds 30S ribosomal subunits, but not 50S ribosomal subunits or 70S ribosomes.

The protein resides in the cytoplasm. Functionally, one of several proteins that assist in the late maturation steps of the functional core of the 30S ribosomal subunit. Associates with free 30S ribosomal subunits (but not with 30S subunits that are part of 70S ribosomes or polysomes). Required for efficient processing of 16S rRNA. May interact with the 5'-terminal helix region of 16S rRNA. This Shewanella frigidimarina (strain NCIMB 400) protein is Ribosome-binding factor A.